A 302-amino-acid polypeptide reads, in one-letter code: Oxygen-dependent coproporphyrinogen-III oxidase (302 aa).

Residue serine 94 coordinates substrate. Residues histidine 98 and histidine 108 each contribute to the a divalent metal cation site. Histidine 108 (proton donor) is an active-site residue. A substrate-binding site is contributed by asparagine 110 to arginine 112. A divalent metal cation is bound by residues histidine 147 and histidine 177. Residues tyrosine 242–aspartate 277 are important for dimerization. Position 260–262 (glycine 260–arginine 262) interacts with substrate.

The protein belongs to the aerobic coproporphyrinogen-III oxidase family. Homodimer. It depends on a divalent metal cation as a cofactor.

The protein localises to the cytoplasm. It catalyses the reaction coproporphyrinogen III + O2 + 2 H(+) = protoporphyrinogen IX + 2 CO2 + 2 H2O. It participates in porphyrin-containing compound metabolism; protoporphyrin-IX biosynthesis; protoporphyrinogen-IX from coproporphyrinogen-III (O2 route): step 1/1. Its function is as follows. Involved in the heme biosynthesis. Catalyzes the aerobic oxidative decarboxylation of propionate groups of rings A and B of coproporphyrinogen-III to yield the vinyl groups in protoporphyrinogen-IX. This is Oxygen-dependent coproporphyrinogen-III oxidase from Alcanivorax borkumensis (strain ATCC 700651 / DSM 11573 / NCIMB 13689 / SK2).